Here is a 257-residue protein sequence, read N- to C-terminus: uncharacterized protein (257 aa).

2 disordered regions span residues 1 to 164 (MERS…AGAC) and 225 to 257 (TAWSGACGAGPTAATAAQPGKPRSAAAPGRARA). The segment covering 10–28 (CGEEPRSGSRRLPKAEGDK) has biased composition (basic and acidic residues). Basic residues predominate over residues 54-65 (RPNRASGRRRRS). Positions 125 to 139 (RPTPRPCAGPAPPPA) are enriched in pro residues. Residues 144–162 (RCRRPRRWPRAGRRGRRAG) are compositionally biased toward basic residues.

This is an uncharacterized protein from Homo sapiens (Human).